The following is a 380-amino-acid chain: Cytochrome b (380 aa).

4 helical membrane-spanning segments follow: residues 34-54 (FGSL…LLAM), 78-99 (WLIR…YLHI), 114-134 (WNTG…GYVL), and 179-199 (FFAL…IHLT). Residues His84 and His98 each coordinate heme b. Positions 183 and 197 each coordinate heme b. A ubiquinone is bound at residue His202. 4 helical membrane passes run 227 to 247 (LKDI…ALFS), 289 to 309 (LGGV…PFLH), 321 to 341 (LSQL…WVGS), and 348 to 368 (FIII…ILFP).

This sequence belongs to the cytochrome b family. In terms of assembly, the cytochrome bc1 complex contains 11 subunits: 3 respiratory subunits (MT-CYB, CYC1 and UQCRFS1), 2 core proteins (UQCRC1 and UQCRC2) and 6 low-molecular weight proteins (UQCRH/QCR6, UQCRB/QCR7, UQCRQ/QCR8, UQCR10/QCR9, UQCR11/QCR10 and a cleavage product of UQCRFS1). This cytochrome bc1 complex then forms a dimer. It depends on heme b as a cofactor.

The protein resides in the mitochondrion inner membrane. Functionally, component of the ubiquinol-cytochrome c reductase complex (complex III or cytochrome b-c1 complex) that is part of the mitochondrial respiratory chain. The b-c1 complex mediates electron transfer from ubiquinol to cytochrome c. Contributes to the generation of a proton gradient across the mitochondrial membrane that is then used for ATP synthesis. The protein is Cytochrome b (MT-CYB) of Ardenna tenuirostris (Short-tailed shearwater).